Consider the following 198-residue polypeptide: MSGTEAGAGEPAAEEPTKEAAQPEAGAPDAGTPEASAPEAGAAQPEAGTQPEAGTAQPEAPPEGTPETTPADEKLGIAHIYSSYNNTIIHMTDLTGAETVSISSGGVHVNADRYESSPFAAMKAANKVIESARAKGFTGFHIRVRAVGGVGSRVPGPGAQAAIRALARGGFRIGRIDDVTPIPHDTTRKKGGKRGRRV.

Low complexity-rich tracts occupy residues 1 to 11 (MSGTEAGAGEP) and 19 to 58 (EAAQ…TAQP). Disordered regions lie at residues 1-72 (MSGT…TPAD) and 178-198 (DVTP…GRRV). The span at 187–198 (TRKKGGKRGRRV) shows a compositional bias: basic residues.

Belongs to the universal ribosomal protein uS11 family. In terms of assembly, part of the 30S ribosomal subunit.

Functionally, located on the platform of the 30S subunit. The chain is Small ribosomal subunit protein uS11 from Cenarchaeum symbiosum (strain A).